The sequence spans 191 residues: Rho-related GTP-binding protein RhoH (191 aa).

11 to 18 is a binding site for GTP; the sequence is GDSAVGKT. The short motif at 33–41 is the Effector region element; sequence YKPTVYENT. GTP is bound at residue 58–62; sequence DTAGN. The interaction with ZAP70 stretch occupies residues 73–86; the sequence is YQQADVVLMCYSVA. 116–119 provides a ligand contact to GTP; it reads TQTD. C188 is subject to Cysteine methyl ester. A lipid anchor (S-geranylgeranyl cysteine) is attached at C188. A propeptide spans 189–191 (removed in mature form); that stretch reads KIL.

Belongs to the small GTPase superfamily. Rho family. In terms of assembly, interacts with GDI1 and GDI2. Interacts with ZAP70 (via SH2 domains) and the interaction is enhanced by its phosphorylation by LCK. Interacts with SYK and the interaction is enhanced by its phosphorylation by FYN. Phosphorylated on tyrosine by LCK. Phosphorylated by FYN. Phosphorylation enhances the interactions with ZAP70 and SYK and is critical for its function in thymocyte development.

It localises to the cytoplasm. The protein localises to the cell membrane. Binds GTP but lacks intrinsic GTPase activity and is resistant to Rho-specific GTPase-activating proteins. Inhibits the activation of NF-kappa-B by TNF and IKKB and the activation of CRK/p38 by TNF. Inhibits activities of RAC1, RHOA and CDC42. Negatively regulates leukotriene production in neutrophils. Negative regulator of hematopoietic progenitor cell proliferation, survival and migration. Critical regulator of thymocyte development and T-cell antigen receptor (TCR) signaling by mediating recruitment and activation of ZAP70. Required for phosphorylation of CD3Z, membrane translocation of ZAP70 and subsequent activation of the ZAP70-mediated pathways. Essential for efficient beta-selection and positive selection by promoting the ZAP70-dependent phosphorylation of the LAT signalosome during pre-TCR and TCR signaling. Crucial for thymocyte maturation during DN3 to DN4 transition and during positive selection. Plays critical roles in mast cell function by facilitating phosphorylation of SYK in Fc epsilon RI-mediated signal transduction. Essential for the phosphorylation of LAT, LCP2, PLCG1 and PLCG2 and for Ca(2+) mobilization in mast cells. This chain is Rho-related GTP-binding protein RhoH (RHOH), found in Bos taurus (Bovine).